We begin with the raw amino-acid sequence, 142 residues long: U1 small nuclear ribonucleoprotein C (142 aa).

The Matrin-type zinc-finger motif lies at 4 to 36; that stretch reads YYCDYCDTFLTHDSPSVRKTHNGGRKHKDNVRM.

This sequence belongs to the U1 small nuclear ribonucleoprotein C family. As to quaternary structure, U1 snRNP is composed of the 7 core Sm proteins B/B', D1, D2, D3, E, F and G that assemble in a heptameric protein ring on the Sm site of the small nuclear RNA to form the core snRNP, and at least 3 U1 snRNP-specific proteins U1-70K, U1-A and U1-C. U1-C interacts with U1 snRNA and the 5' splice-site region of the pre-mRNA.

It is found in the nucleus. Functionally, component of the spliceosomal U1 snRNP, which is essential for recognition of the pre-mRNA 5' splice-site and the subsequent assembly of the spliceosome. U1-C is directly involved in initial 5' splice-site recognition for both constitutive and regulated alternative splicing. The interaction with the 5' splice-site seems to precede base-pairing between the pre-mRNA and the U1 snRNA. Stimulates commitment or early (E) complex formation by stabilizing the base pairing of the 5' end of the U1 snRNA and the 5' splice-site region. This chain is U1 small nuclear ribonucleoprotein C, found in Caenorhabditis elegans.